Consider the following 1176-residue polypeptide: Chromosome partition protein Smc (1176 aa).

Position 32–39 (32–39 (PNGCGKSN)) interacts with ATP. Residues 169-506 (GVSRYKERRR…VKLQEDVQKQ (338 aa)) are a coiled coil. Positions 521 to 623 (LGRLWQKLHI…TAPDLGQALA (103 aa)) constitute an SMC hinge domain. Coiled-coil stretches lie at residues 653 to 947 (DSEQ…LAAM) and 987 to 1024 (ERKE…LQAT).

The protein belongs to the SMC family. Homodimer.

The protein resides in the cytoplasm. In terms of biological role, required for chromosome condensation and partitioning. The protein is Chromosome partition protein Smc of Bordetella petrii (strain ATCC BAA-461 / DSM 12804 / CCUG 43448).